The primary structure comprises 561 residues: Cytochrome P450 monooxygenase avaL (561 aa).

The chain crosses the membrane as a helical span at residues 19 to 39; the sequence is IAASCALVCIVSACYVVWSLL. Cys508 serves as a coordination point for heme.

The protein belongs to the cytochrome P450 family. Requires heme as cofactor.

It is found in the membrane. It functions in the pathway secondary metabolite biosynthesis. In terms of biological role, cytochrome P450 monooxygenase; part of the cluster that mediates the biosynthesis of a highly modified cyclo-arginine-tryptophan dipeptide (cRW). The first step of the pathway is perfornmed by the arginine-containing cyclodipeptide synthase (RCPDS) avaA that acts as the scaffold-generating enzyme and is responsible for formation of the cyclo-Arg-Trp (cRW) diketopiperazine. AvaB then acts as a multifunctional flavoenzyme that is responsible for generating the cyclo-Arg-formylkynurenine DKP, which can be deformylated by avaC. AvaB then further catalyzes an additional N-oxidation followed by cyclization and dehydration. The next step is an N-acetylation of the guanidine group catalyzed by the arginine N-acetyltransferase avaD. The roles of the additional enzymes identified within the ava cluster still have to be determined. The polypeptide is Cytochrome P450 monooxygenase avaL (Aspergillus versicolor).